Reading from the N-terminus, the 190-residue chain is Large ribosomal subunit protein uL6 (190 aa).

The protein belongs to the universal ribosomal protein uL6 family.

The sequence is that of Large ribosomal subunit protein uL6 (RpL9) from Spodoptera frugiperda (Fall armyworm).